A 3456-amino-acid chain; its full sequence is Genome polyprotein (3456 aa).

The Peptidase S30 domain maps to 600–743 (NVANIPLDDF…ATRLKQIQFY (144 aa)). Catalysis depends on for P1 proteinase activity residues His-640, Asp-652, and Ser-689. The Peptidase C6 domain occupies 1075 to 1196 (VWEFNEGYCY…EGEMLTYKVG (122 aa)). Cys-1083 serves as the catalytic For helper component proteinase activity. Residues 1094–1126 (FINEDEMEFYKNQMNQIVLNLGAWPTFEQYLVE) form an HAT 1 repeat. The active-site For helper component proteinase activity is the His-1155. A Helicase ATP-binding domain is found at 1617-1768 (NIRTSGETDV…TRHKIKVETL (152 aa)). 1630 to 1637 (SGVGGGKS) serves as a coordination point for ATP. Residues 1787-1947 (DATSVGDVIL…GIKPVCDRVD (161 aa)) form the Helicase C-terminal domain. An O-(5'-phospho-RNA)-tyrosine modification is found at Tyr-2304. One can recognise a Peptidase C4 domain in the interval 2412–2636 (AVDSHVGTPT…VEWSRLLPTT (225 aa)). Residues His-2457, Asp-2494, and Cys-2566 each act as for nuclear inclusion protein A activity in the active site. An HAT 2 repeat occupies 2597 to 2629 (HIFEPVNETFIEMLAKMEYAKGFWKFNPELVEW). One can recognise a RdRp catalytic domain in the interval 2891-3011 (WVFIDCDGSR…NCPRSTANAI (121 aa)). The HAT 3 repeat unit spans residues 3082 to 3115 (LNAAYIESFGYEDLMTEIEKFAHFWAKKHGLNDV).

In terms of processing, VPg is uridylylated by the polymerase and is covalently attached to the 5'-end of the genomic RNA. This uridylylated form acts as a nucleotide-peptide primer for the polymerase. Genome polyprotein of potyviruses undergoes post-translational proteolytic processing by the main proteinase NIa-pro resulting in the production of at least ten individual proteins. The P1 proteinase and the HC-pro cleave only their respective C-termini autocatalytically. 6K1 is essential for proper proteolytic separation of P3 from CI.

Its subcellular location is the host cytoplasmic vesicle. The protein resides in the virion. It carries out the reaction RNA(n) + a ribonucleoside 5'-triphosphate = RNA(n+1) + diphosphate. The catalysed reaction is Hydrolyzes glutaminyl bonds, and activity is further restricted by preferences for the amino acids in P6 - P1' that vary with the species of potyvirus, e.g. Glu-Xaa-Xaa-Tyr-Xaa-Gln-|-(Ser or Gly) for the enzyme from tobacco etch virus. The natural substrate is the viral polyprotein, but other proteins and oligopeptides containing the appropriate consensus sequence are also cleaved.. It catalyses the reaction Hydrolyzes a Gly-|-Gly bond at its own C-terminus, commonly in the sequence -Tyr-Xaa-Val-Gly-|-Gly, in the processing of the potyviral polyprotein.. Its function is as follows. Required for aphid transmission and also has proteolytic activity. Only cleaves a Gly-Gly dipeptide at its own C-terminus. Interacts with virions and aphid stylets. Acts as a suppressor of RNA-mediated gene silencing, also known as post-transcriptional gene silencing (PTGS), a mechanism of plant viral defense that limits the accumulation of viral RNAs. May have RNA-binding activity. Functionally, has helicase activity. It may be involved in replication. Indispensable for virus replication. In terms of biological role, mediates the cap-independent, EIF4E-dependent translation of viral genomic RNAs. Binds to the cap-binding site of host EIF4E and thus interferes with the host EIF4E-dependent mRNA export and translation. VPg-RNA directly binds EIF4E and is a template for transcription. Also forms trimeric complexes with EIF4E-EIF4G, which are templates for translation. Its function is as follows. Has RNA-binding and proteolytic activities. Functionally, an RNA-dependent RNA polymerase that plays an essential role in the virus replication. Involved in aphid transmission, cell-to-cell and systemis movement, encapsidation of the viral RNA and in the regulation of viral RNA amplification. In Sweet potato mild mottle virus (isolate Salazar) (SPMMV), this protein is Genome polyprotein.